Here is an 803-residue protein sequence, read N- to C-terminus: Bromodomain-containing protein 2 (803 aa).

At Met-1 the chain carries N-acetylmethionine. Residue Thr-6 is modified to Phosphothreonine. Position 37 is a phosphoserine (Ser-37). The interval 53 to 73 is disordered; that stretch reads ALQLTPANPPPPEVSNPKKPG. The region spanning 74–180 is the Bromo 1 domain; the sequence is RVTNQLQYLH…KIFLQKVASM (107 aa). Residues Asp-112, Tyr-155, Asn-156, Lys-157, Asp-160, and Asp-161 each contribute to the a protein site. Disordered regions lie at residues 268 to 348, 456 to 652, and 739 to 803; these read PPAQ…KLSE, EPLE…KRQL, and EKRL…SDSG. The segment covering 285–298 has biased composition (low complexity); that stretch reads TTTPTPTAILAPGS. Residues Ser-298 and Ser-301 each carry the phosphoserine modification. Residues 316-332 show a composition bias toward basic and acidic residues; sequence VRRESGRPIKPPRKDLP. The 110-residue stretch at 344–453 folds into the Bromo 2 domain; the sequence is GKLSEQLKHC…DVFEFRYAKM (110 aa). Positions 481-515 are enriched in acidic residues; the sequence is SSEESSSESSSEEEEEEDEDEEEEEEESESSDSEE. Residues 545-567 are compositionally biased toward basic residues; that stretch reads KPKRKREKKEKKKKRKAEKHRGR. The Nuclear localization signal signature appears at 556 to 560; that stretch reads KKKRK. Residues 623-632 are compositionally biased toward low complexity; sequence KTAPPALPAG. In terms of domain architecture, NET spans 634–716; that stretch reads DSEEEEESRP…SCLRKKPRKP (83 aa). Ser-635 bears the Phosphoserine mark. The span at 641-652 shows a compositional bias: basic and acidic residues; sequence SRPMSYDEKRQL. Residues 777 to 797 show a composition bias toward low complexity; sequence SASSSSSDSSSSSSSSSSSDT.

Belongs to the BET family. In terms of assembly, homodimer. Interacts with E2F1. Interacts with (acetylated) STAT3; promoting STAT3 recruitment to chromatin. Interacts with CTCF; promoting BRD2 recruitment to chromatin.

It is found in the nucleus. The protein resides in the chromosome. Chromatin reader protein that specifically recognizes and binds histone H4 acetylated at 'Lys-5' and 'Lys-12' (H4K5ac and H4K12ac, respectively), thereby controlling gene expression and remodeling chromatin structures. Recruits transcription factors and coactivators to target gene sites, and activates RNA polymerase II machinery for transcriptional elongation. Plays a key role in genome compartmentalization via its association with CTCF and cohesin: recruited to chromatin by CTCF and promotes formation of topologically associating domains (TADs) via its ability to bind acetylated histones, contributing to CTCF boundary formation and enhancer insulation. Also recognizes and binds acetylated non-histone proteins, such as STAT3. Involved in inflammatory response by regulating differentiation of naive CD4(+) T-cells into T-helper Th17: recognizes and binds STAT3 acetylated at 'Lys-87', promoting STAT3 recruitment to chromatin. In addition to acetylated lysines, also recognizes and binds lysine residues on histones that are both methylated and acetylated on the same side chain to form N6-acetyl-N6-methyllysine (Kacme), an epigenetic mark of active chromatin associated with increased transcriptional initiation. Specifically binds histone H4 acetyl-methylated at 'Lys-5' and 'Lys-12' (H4K5acme and H4K12acme, respectively). This chain is Bromodomain-containing protein 2 (BRD2), found in Bos taurus (Bovine).